The sequence spans 450 residues: Phosphoglucosamine mutase (450 aa).

Residue S100 is the Phosphoserine intermediate of the active site. Mg(2+) is bound by residues S100, D240, D242, and D244. Position 100 is a phosphoserine (S100).

It belongs to the phosphohexose mutase family. Mg(2+) is required as a cofactor. Activated by phosphorylation.

It catalyses the reaction alpha-D-glucosamine 1-phosphate = D-glucosamine 6-phosphate. In terms of biological role, catalyzes the conversion of glucosamine-6-phosphate to glucosamine-1-phosphate. The protein is Phosphoglucosamine mutase of Desulforudis audaxviator (strain MP104C).